Here is a 142-residue protein sequence, read N- to C-terminus: Baculoviral IAP repeat-containing protein 5 (142 aa).

Residues 18–88 form a BIR repeat; it reads RIYTFKNWPF…KHSPGCAFLT (71 aa). Lysine 23 carries the N6-acetyllysine modification. Threonine 34 bears the Phosphothreonine; by CDK1 and CDK15 mark. A Phosphothreonine modification is found at threonine 48. Zn(2+) contacts are provided by cysteine 57, cysteine 60, histidine 77, and cysteine 84. 4 positions are modified to N6-acetyllysine: lysine 90, lysine 110, lysine 112, and lysine 115. Threonine 117 is subject to Phosphothreonine; by AURKB.

It belongs to the IAP family. In terms of assembly, monomer or homodimer. Exists as a homodimer in the apo state and as a monomer in the CPC-bound state. The monomer protects cells against apoptosis more efficiently than the dimer. Only the dimeric form is capable of enhancing tubulin stability in cells. When phosphorylated, interacts with LAMTOR5/HBXIP; the resulting complex binds pro-CASP9, as well as active CASP9, but much less efficiently. Component of the chromosomal passenger complex (CPC) composed of at least BIRC5/survivin, CDCA8/borealin, INCENP, AURKB or AURKC; in the complex forms a triple-helix bundle-based subcomplex with INCENP and CDCA8. Interacts with JTB. Interacts (via BIR domain) with histone H3 phosphorylated at 'Thr-3' (H3pT3). Interacts with EVI5. Interacts with GTP-bound RAN in both the S and M phases of the cell cycle. Interacts with USP9X. Interacts with tubulin. Interacts with BIRC2/c-IAP1. The monomeric form interacts with XIAP/BIRC4. Both the dimeric and monomeric form can interact with DIABLO/SMAC. Interacts with BIRC6/bruce. Interacts with FBXL7; this interaction facilitates the polyubiquitination and subsequent proteasomal degradation of BIRC5 by the SCF(FBXL7) E3 ubiquitin-protein ligase complex. Ubiquitinated by the Cul9-RING ubiquitin-protein ligase complex, leading to its degradation. Ubiquitination is required for centrosomal targeting. Deubiquitinated by USP35 or USP38; leading to stabilization. Post-translationally, in vitro phosphorylation at Thr-117 by AURKB prevents interaction with INCENP and localization to mitotic chromosomes. Phosphorylation at Thr-48 by CK2 is critical for its mitotic and anti-apoptotic activities. Phosphorylation at Thr-34 by CDK15 is critical for its anti-apoptotic activity.

It localises to the cytoplasm. It is found in the nucleus. The protein resides in the chromosome. Its subcellular location is the centromere. The protein localises to the cytoskeleton. It localises to the spindle. It is found in the kinetochore. The protein resides in the midbody. Functionally, multitasking protein that has dual roles in promoting cell proliferation and preventing apoptosis. Component of a chromosome passage protein complex (CPC) which is essential for chromosome alignment and segregation during mitosis and cytokinesis. Acts as an important regulator of the localization of this complex; directs CPC movement to different locations from the inner centromere during prometaphase to midbody during cytokinesis and participates in the organization of the center spindle by associating with polymerized microtubules. Involved in the recruitment of CPC to centromeres during early mitosis via association with histone H3 phosphorylated at 'Thr-3' (H3pT3) during mitosis. The complex with RAN plays a role in mitotic spindle formation by serving as a physical scaffold to help deliver the RAN effector molecule TPX2 to microtubules. May counteract a default induction of apoptosis in G2/M phase. The acetylated form represses STAT3 transactivation of target gene promoters. May play a role in neoplasia. Inhibitor of CASP3 and CASP7. Essential for the maintenance of mitochondrial integrity and function. The polypeptide is Baculoviral IAP repeat-containing protein 5 (Birc5) (Rattus norvegicus (Rat)).